The primary structure comprises 264 residues: MHSAANAKQQKHFVLVHGGCLGAWIWYKLKPLLESAGHKVTAVDLSAAGINPRRLDEIHTFRDYSEPLMEVMASIPPDEKVVLLGHSFGGMSLGLAMETYPEKISVAVFMSAMMPDPNHSLTYPFEKYNEKCPADMMLDSQFSTYGNPENPGMSMILGPQFMALKMFQNCSVEDLELAKMLTRPGSLFFQDLAKAKKFSTERYGSVKRAYIFCNEDKSFPVEFQKWFVESVGADKVKEIKEADHMGMLSQPREVCKCLLDISDS.

Positions 1-6 are excised as a propeptide; sequence MHSAAN. The 111-residue stretch at 12–122 folds into the AB hydrolase-1 domain; the sequence is HFVLVHGGCL…MMPDPNHSLT (111 aa). Active-site residues include serine 87, aspartate 216, and histidine 244. Serine 87 contributes to the 16-epivellosimine binding site.

This sequence belongs to the AB hydrolase superfamily. As to quaternary structure, homodimer; homodimerizes in aqueous solutions at pH 7.0. As to expression, mainly expressed in roots and, to a lower level, in leaves.

It catalyses the reaction polyneuridine aldehyde + H2O = 16-epivellosimine + methanol + CO2. It functions in the pathway alkaloid biosynthesis; ajmaline biosynthesis. Inhibited by DEPC and HgCl(2). Functionally, hydrolase involved in the biosynthesis of ajmaline-type monoterpenoid indole alkaloids (MIAs) natural products, important plant-derived pharmaceuticals used in the therapy of heart disorders. Catalyzes the hydrolysis of polyneuridine aldehyde into epi-vellosimine, precursor of vomilenine, an intermediate chemical in the biosynthesis of ajmaline. This Rauvolfia serpentina (Serpentine wood) protein is Polyneuridine aldehyde esterase.